Reading from the N-terminus, the 587-residue chain is Putative phagocytic receptor 1b (587 aa).

The signal sequence occupies residues 1-23; it reads MRLQILLIYLICIIVSSIVLVES. Helical transmembrane passes span 223-243, 294-314, 319-339, 354-374, 390-410, 448-468, 480-500, 524-544, and 556-576; these read LSVM…AIMI, IGWQ…FGMF, GGNM…ISGY, AWNI…VVIL, ILTM…LTVV, ILIA…YIFN, GILC…TVAL, VVFI…MYGL, and IVCF…SLIF.

The protein belongs to the nonaspanin (TM9SF) (TC 9.A.2) family.

The protein localises to the membrane. Functionally, involved in adhesion and phagocytosis of hydrophilic particles. The polypeptide is Putative phagocytic receptor 1b (phg1b) (Dictyostelium discoideum (Social amoeba)).